Here is a 54-residue protein sequence, read N- to C-terminus: Relaxin (54 aa).

Gln1 is subject to Pyrrolidone carboxylic acid. 3 cysteine pairs are disulfide-bonded: Cys10–Cys41, Cys22–Cys54, and Cys40–Cys45.

The protein belongs to the insulin family. As to quaternary structure, heterodimer of a B chain and an A chain linked by two disulfide bonds.

It localises to the secreted. Relaxin is an ovarian hormone that acts with estrogen to produce dilatation of the birth canal in many mammals. This is Relaxin from Balaenoptera edeni (Pigmy Bryde's whale).